Reading from the N-terminus, the 71-residue chain is Large ribosomal subunit protein bL32c (71 aa).

The disordered stretch occupies residues 1-24 (MAVPKKRTSRSKKKIRKNVRKGKK).

The protein belongs to the bacterial ribosomal protein bL32 family.

The protein resides in the plastid. The protein localises to the chloroplast. The protein is Large ribosomal subunit protein bL32c of Pinus koraiensis (Korean pine).